The chain runs to 233 residues: MGQKVHPTGIRLGISKPWVSTWYASSKDFSAQLFGDHKVRTFLTKELKTASVSKIVIERPAKSIRVTIHTARPGVVIGKKGEDVEKLRQAVTKIAGVPAQINISEVRKPELDAQLVADGIASQLERRVMFRRAMKRSVQNAMRIGSKGIKVEVSGRLGGAEIARTEWYREGRVPLHTLRADIDYATSEALTTYGIIGVKVWIFKGEVIGGLPLVQEQEKPAKRAPKKAKKSAK.

Residues 39-107 (VRTFLTKELK…PAQINISEVR (69 aa)) enclose the KH type-2 domain.

It belongs to the universal ribosomal protein uS3 family. In terms of assembly, part of the 30S ribosomal subunit. Forms a tight complex with proteins S10 and S14.

Binds the lower part of the 30S subunit head. Binds mRNA in the 70S ribosome, positioning it for translation. This is Small ribosomal subunit protein uS3 from Pseudoalteromonas translucida (strain TAC 125).